Consider the following 372-residue polypeptide: NAD(P)H-quinone oxidoreductase subunit 1 (372 aa).

The next 8 helical transmembrane spans lie at 29 to 49 (WLPF…LVTV), 97 to 117 (LLFT…YLVV), 128 to 148 (LGVA…GLLM), 176 to 196 (LALA…IDIV), 204 to 224 (ILGW…IAVL), 254 to 274 (FALY…LVAV), 308 to 328 (TLGI…AVLL), and 351 to 371 (VALV…FAFG).

It belongs to the complex I subunit 1 family. NDH-1 is composed of at least 11 different subunits.

The protein localises to the cellular thylakoid membrane. It catalyses the reaction a plastoquinone + NADH + (n+1) H(+)(in) = a plastoquinol + NAD(+) + n H(+)(out). The enzyme catalyses a plastoquinone + NADPH + (n+1) H(+)(in) = a plastoquinol + NADP(+) + n H(+)(out). In terms of biological role, NDH-1 shuttles electrons from an unknown electron donor, via FMN and iron-sulfur (Fe-S) centers, to quinones in the respiratory and/or the photosynthetic chain. The immediate electron acceptor for the enzyme in this species is believed to be plastoquinone. Couples the redox reaction to proton translocation, and thus conserves the redox energy in a proton gradient. This chain is NAD(P)H-quinone oxidoreductase subunit 1, found in Trichodesmium erythraeum (strain IMS101).